Reading from the N-terminus, the 608-residue chain is Probable adenylate kinase 5, chloroplastic (608 aa).

The segment covering 1–20 (MAASSSSSSPAAASAPFAAP) has biased composition (low complexity). Positions 1 to 44 (MAASSSSSSPAAASAPFAAPGPHRRPGLALRPSPPTPPSSSLSC) are disordered. Residues 1–75 (MAASSSSSSP…GPRGMGLRCR (75 aa)) constitute a chloroplast transit peptide. An ATP-binding site is contributed by 99 to 104 (ASGKGT). The tract at residues 119-148 (STGDLLRAEVSSGTEIGKKAKEYMDNGMLV) is NMP. AMP contacts are provided by residues Thr-120, Arg-125, 146-148 (MLV), 175-178 (GYPR), and Gln-182. ATP-binding positions include Arg-209, Arg-213, and 222-223 (IY). Residues 212–245 (GRRLDPETGKIYHIKNFPPENDEVSARLVTRSDD) form an LID region. The AMP site is built by Arg-242 and Arg-253.

This sequence belongs to the adenylate kinase family.

It localises to the plastid. Its subcellular location is the chloroplast. It carries out the reaction AMP + ATP = 2 ADP. Catalyzes the reversible transfer of the terminal phosphate group between ATP and AMP. Plays an important role in cellular energy homeostasis and in adenine nucleotide metabolism. The sequence is that of Probable adenylate kinase 5, chloroplastic from Oryza sativa subsp. japonica (Rice).